The sequence spans 249 residues: 3-deoxy-manno-octulosonate cytidylyltransferase (249 aa).

This sequence belongs to the KdsB family.

It is found in the cytoplasm. It carries out the reaction 3-deoxy-alpha-D-manno-oct-2-ulosonate + CTP = CMP-3-deoxy-beta-D-manno-octulosonate + diphosphate. The protein operates within nucleotide-sugar biosynthesis; CMP-3-deoxy-D-manno-octulosonate biosynthesis; CMP-3-deoxy-D-manno-octulosonate from 3-deoxy-D-manno-octulosonate and CTP: step 1/1. It participates in bacterial outer membrane biogenesis; lipopolysaccharide biosynthesis. Functionally, activates KDO (a required 8-carbon sugar) for incorporation into bacterial lipopolysaccharide in Gram-negative bacteria. The protein is 3-deoxy-manno-octulosonate cytidylyltransferase of Coxiella burnetii (strain CbuG_Q212) (Coxiella burnetii (strain Q212)).